Reading from the N-terminus, the 110-residue chain is Large ribosomal subunit protein uL22 (110 aa).

Belongs to the universal ribosomal protein uL22 family. As to quaternary structure, part of the 50S ribosomal subunit.

This protein binds specifically to 23S rRNA; its binding is stimulated by other ribosomal proteins, e.g. L4, L17, and L20. It is important during the early stages of 50S assembly. It makes multiple contacts with different domains of the 23S rRNA in the assembled 50S subunit and ribosome. In terms of biological role, the globular domain of the protein is located near the polypeptide exit tunnel on the outside of the subunit, while an extended beta-hairpin is found that lines the wall of the exit tunnel in the center of the 70S ribosome. This chain is Large ribosomal subunit protein uL22, found in Glaesserella parasuis serovar 5 (strain SH0165) (Haemophilus parasuis).